The primary structure comprises 282 residues: Probable endonuclease 4 (282 aa).

The Zn(2+) site is built by His-69, His-109, Glu-145, Asp-179, His-182, His-216, Asp-229, His-231, and Glu-261.

It belongs to the AP endonuclease 2 family. Zn(2+) serves as cofactor.

The catalysed reaction is Endonucleolytic cleavage to 5'-phosphooligonucleotide end-products.. Functionally, endonuclease IV plays a role in DNA repair. It cleaves phosphodiester bonds at apurinic or apyrimidinic (AP) sites, generating a 3'-hydroxyl group and a 5'-terminal sugar phosphate. The protein is Probable endonuclease 4 of Edwardsiella ictaluri (strain 93-146).